The sequence spans 267 residues: Small ribosomal subunit protein uS10m (267 aa).

The N-terminal 10 residues, 1–10, are a transit peptide targeting the mitochondrion; that stretch reads MLSRILGVRN.

This sequence belongs to the universal ribosomal protein uS10 family. In terms of assembly, part of the mitochondrial small ribosomal subunit.

It is found in the mitochondrion. In terms of biological role, involved in mitochondrial genome encoded proteins translation. Involved in the binding of tRNA to the ribosomes. The sequence is that of Small ribosomal subunit protein uS10m (RSM10) from Debaryomyces hansenii (strain ATCC 36239 / CBS 767 / BCRC 21394 / JCM 1990 / NBRC 0083 / IGC 2968) (Yeast).